Consider the following 131-residue polypeptide: Phosphoribosyl-AMP cyclohydrolase (131 aa).

Residue Asp74 coordinates Mg(2+). Zn(2+) is bound at residue Cys75. Mg(2+)-binding residues include Asp76 and Asp78. 2 residues coordinate Zn(2+): Cys91 and Cys98.

It belongs to the PRA-CH family. As to quaternary structure, homodimer. The cofactor is Mg(2+). It depends on Zn(2+) as a cofactor.

It localises to the cytoplasm. The catalysed reaction is 1-(5-phospho-beta-D-ribosyl)-5'-AMP + H2O = 1-(5-phospho-beta-D-ribosyl)-5-[(5-phospho-beta-D-ribosylamino)methylideneamino]imidazole-4-carboxamide. Its pathway is amino-acid biosynthesis; L-histidine biosynthesis; L-histidine from 5-phospho-alpha-D-ribose 1-diphosphate: step 3/9. Its function is as follows. Catalyzes the hydrolysis of the adenine ring of phosphoribosyl-AMP. The chain is Phosphoribosyl-AMP cyclohydrolase from Bradyrhizobium sp. (strain BTAi1 / ATCC BAA-1182).